A 116-amino-acid polypeptide reads, in one-letter code: Large ribosomal subunit protein bL20c (116 aa).

This sequence belongs to the bacterial ribosomal protein bL20 family.

The protein resides in the plastid. It localises to the chloroplast. In terms of biological role, binds directly to 23S ribosomal RNA and is necessary for the in vitro assembly process of the 50S ribosomal subunit. It is not involved in the protein synthesizing functions of that subunit. This chain is Large ribosomal subunit protein bL20c, found in Ipomoea purpurea (Common morning glory).